We begin with the raw amino-acid sequence, 362 residues long: Class I histocompatibility antigen, Gogo-OKO alpha chain (362 aa).

Residues 1-24 (MAVVAPRTLLLLLSGTLALTRTWA) form the signal peptide. The interval 25–114 (GSHSMRYFYT…LRGYYNQSEG (90 aa)) is alpha-1. The Extracellular segment spans residues 25-308 (GSHSMRYFYT…EPSSQPTIPI (284 aa)). Asn-110 is a glycosylation site (N-linked (GlcNAc...) asparagine). The interval 115 to 206 (GSHTIQRMYG…ENGKETLQRT (92 aa)) is alpha-2. Intrachain disulfides connect Cys-125–Cys-188 and Cys-227–Cys-283. The interval 207-298 (DPPKTHMTHH…GLPKPLTLRW (92 aa)) is alpha-3. Residues 209 to 295 (PKTHMTHHPV…QHEGLPKPLT (87 aa)) form the Ig-like C1-type domain. Positions 299–308 (EPSSQPTIPI) are connecting peptide. A helical membrane pass occupies residues 309 to 332 (VGIIAGLVLLGAVITGAVVAAMMW). Residues 333 to 362 (RKKSSGRKGGSYSQAASSDSAQGSDVSLTA) lie on the Cytoplasmic side of the membrane. The interval 337-362 (SGRKGGSYSQAASSDSAQGSDVSLTA) is disordered. Over residues 342 to 362 (GSYSQAASSDSAQGSDVSLTA) the composition is skewed to low complexity.

The protein belongs to the MHC class I family. As to quaternary structure, heterodimer of an alpha chain and a beta chain (beta-2-microglobulin).

The protein localises to the membrane. Functionally, involved in the presentation of foreign antigens to the immune system. This Gorilla gorilla gorilla (Western lowland gorilla) protein is Class I histocompatibility antigen, Gogo-OKO alpha chain.